Reading from the N-terminus, the 377-residue chain is Metallo-hydrolase mfmC (377 aa).

Histidine 126, histidine 128, aspartate 130, histidine 131, histidine 209, and aspartate 233 together coordinate Zn(2+).

It belongs to the metallo-beta-lactamase superfamily.

Its pathway is secondary metabolite biosynthesis; terpenoid biosynthesis. Its function is as follows. Metallo-hydrolase; part of the gene cluster that mediates the biosynthesis of the phthalide-terpenoid hybrid 11'-O-desmethylfendlerol. Within the pathway, mfma and mfmC act together to convert 3,5-dimethylorsellinic acid (DMOA) into the phthalide 5,7-dihydroxy-4-(hydroxymethyl)-6-methylphthalide. The biosynthesis of 11'-O-desmethylfendlerol begins with the NR-PKS mfmB that forms 3,5-dimethylorsellinic acid (DMOA), which is then transformed into the phthalide 5,7-dihydroxy-4-(hydroxymethyl)-6-methylphthalide by the cytochrome P450 monooxygenase mfmA and the hydrolase mfmC. Subsequently, the methyltransferase mfmE catalyzes 7-O-methylation to yield 5-hydroxy-4-(hydroxymethyl)-7-methoxy-6-methylphthalide, which undergoes C-3 hydroxylation by the cytochrome P450 monooxygenase mfmF. The resultant cyclopolic acid (2,5-dihydroxy-4-(hydroxymethyl)-7-methoxy-6-methylphthalide) is then farnesylated by the DMATS-type prenyltransferase mfmD to afford 5-O-farnesylcyclopolic acid. Finally, the Pyr4-family terpene cyclase mfmH cyclizes the farnesyl moiety of 5-O-farnesylcyclopolic acid into a drimane-like structure, thus completing the biosynthesis of 11'-O-desmethylfendlerol. This Annulohypoxylon moriforme (Filamentous fungus) protein is Metallo-hydrolase mfmC.